The sequence spans 367 residues: tRNA-specific 2-thiouridylase MnmA (367 aa).

Residues 6 to 13 (AMSGGVDS) and M32 contribute to the ATP site. The active-site Nucleophile is C101. C101 and C193 are joined by a disulfide. Residue G125 participates in ATP binding. The interval 143–145 (KDQ) is interaction with tRNA. C193 functions as the Cysteine persulfide intermediate in the catalytic mechanism.

Belongs to the MnmA/TRMU family.

Its subcellular location is the cytoplasm. It catalyses the reaction S-sulfanyl-L-cysteinyl-[protein] + uridine(34) in tRNA + AH2 + ATP = 2-thiouridine(34) in tRNA + L-cysteinyl-[protein] + A + AMP + diphosphate + H(+). Functionally, catalyzes the 2-thiolation of uridine at the wobble position (U34) of tRNA, leading to the formation of s(2)U34. This Mycobacterium tuberculosis (strain CDC 1551 / Oshkosh) protein is tRNA-specific 2-thiouridylase MnmA.